The primary structure comprises 290 residues: Thymidylate synthase (290 aa).

DUMP is bound by residues Arg-27 and 152–153 (RR). The Nucleophile role is filled by Cys-172. Residues 192 to 195 (RSAD), Asn-203, and 233 to 235 (HVY) each bind dUMP. Residue Asp-195 coordinates (6R)-5,10-methylene-5,6,7,8-tetrahydrofolate. Ala-289 provides a ligand contact to (6R)-5,10-methylene-5,6,7,8-tetrahydrofolate.

This sequence belongs to the thymidylate synthase family. As to quaternary structure, homodimer.

The enzyme catalyses dUMP + (6R)-5,10-methylene-5,6,7,8-tetrahydrofolate = 7,8-dihydrofolate + dTMP. It functions in the pathway pyrimidine metabolism; dTTP biosynthesis. The protein is Thymidylate synthase (TS) of Ateles.